A 1382-amino-acid polypeptide reads, in one-letter code: DNA-directed RNA polymerase subunit beta' (1382 aa).

Residues Cys70, Cys72, Cys85, and Cys88 each contribute to the Zn(2+) site. Mg(2+) contacts are provided by Asp460, Asp462, and Asp464. Zn(2+)-binding residues include Cys808, Cys882, Cys889, and Cys892.

This sequence belongs to the RNA polymerase beta' chain family. As to quaternary structure, the RNAP catalytic core consists of 2 alpha, 1 beta, 1 beta' and 1 omega subunit. When a sigma factor is associated with the core the holoenzyme is formed, which can initiate transcription. Requires Mg(2+) as cofactor. Zn(2+) is required as a cofactor.

It carries out the reaction RNA(n) + a ribonucleoside 5'-triphosphate = RNA(n+1) + diphosphate. In terms of biological role, DNA-dependent RNA polymerase catalyzes the transcription of DNA into RNA using the four ribonucleoside triphosphates as substrates. This chain is DNA-directed RNA polymerase subunit beta', found in Citrifermentans bemidjiense (strain ATCC BAA-1014 / DSM 16622 / JCM 12645 / Bem) (Geobacter bemidjiensis).